The primary structure comprises 384 residues: MSSYLFTSESVSEGHPDKIADQISDAVLDEILKQDPKARVACETYVKTGMALVGGEITTSAWVDIENLTRKVICDIGYEHSEMGFDGHSCAVLNAIGKQSADINQGVDRENPLDQGAGDQGIMFGYATNETDVLMPAAITYAHRLMEKQAEVRKSGKLAWLRPDAKSQVTLKYEDNKIVGVDAVVLSTQHSEEVSQKDLHEGVMEEIIKPVLPTEWLSKETKFFINPTGRFVIGGPMGDCGLTGRKIIVDTYGGAARHGGGAFSGKDPSKVDRSAAYAARYVAKNIVAAGLADRCEIQLSYAIGVADPTSIMVETFGTGKVANELLVSLVREFFDLRPYGLIKMLDLIQPIYRETAAYGHFGREQFPWEKVDRAEDLRIAAGLK.

Position 15 (H15) interacts with ATP. Residue D17 coordinates Mg(2+). E43 is a K(+) binding site. L-methionine contacts are provided by E56 and Q99. The tract at residues 99 to 109 (QSADINQGVDR) is flexible loop. ATP-binding positions include 164–166 (DAK), 230–231 (RF), D239, 245–246 (RK), A262, and K266. Residue D239 coordinates L-methionine. Residue K270 coordinates L-methionine.

The protein belongs to the AdoMet synthase family. In terms of assembly, homotetramer; dimer of dimers. Requires Mg(2+) as cofactor. The cofactor is K(+).

The protein resides in the cytoplasm. It carries out the reaction L-methionine + ATP + H2O = S-adenosyl-L-methionine + phosphate + diphosphate. It participates in amino-acid biosynthesis; S-adenosyl-L-methionine biosynthesis; S-adenosyl-L-methionine from L-methionine: step 1/1. Catalyzes the formation of S-adenosylmethionine (AdoMet) from methionine and ATP. The overall synthetic reaction is composed of two sequential steps, AdoMet formation and the subsequent tripolyphosphate hydrolysis which occurs prior to release of AdoMet from the enzyme. This chain is S-adenosylmethionine synthase, found in Haemophilus influenzae (strain 86-028NP).